Here is a 1498-residue protein sequence, read N- to C-terminus: DNA-directed RNA polymerase subunit beta' (1498 aa).

Zn(2+) contacts are provided by Cys67, Cys69, Cys82, and Cys85. Residues Asp499, Asp501, and Asp503 each contribute to the Mg(2+) site. Zn(2+) contacts are provided by Cys867, Cys943, Cys950, and Cys953.

The protein belongs to the RNA polymerase beta' chain family. In terms of assembly, the RNAP catalytic core consists of 2 alpha, 1 beta, 1 beta' and 1 omega subunit. When a sigma factor is associated with the core the holoenzyme is formed, which can initiate transcription. Requires Mg(2+) as cofactor. Zn(2+) serves as cofactor.

It catalyses the reaction RNA(n) + a ribonucleoside 5'-triphosphate = RNA(n+1) + diphosphate. DNA-dependent RNA polymerase catalyzes the transcription of DNA into RNA using the four ribonucleoside triphosphates as substrates. The protein is DNA-directed RNA polymerase subunit beta' of Chlorobium luteolum (strain DSM 273 / BCRC 81028 / 2530) (Pelodictyon luteolum).